A 624-amino-acid polypeptide reads, in one-letter code: DNA mismatch repair protein MutL (624 aa).

Positions 360 to 396 are disordered; it reads GGNHFSQPAPRRETASTEPAVARERAPQPAYHSGSGY. Residues 369–385 show a composition bias toward basic and acidic residues; sequence PRRETASTEPAVARERA.

Belongs to the DNA mismatch repair MutL/HexB family.

This protein is involved in the repair of mismatches in DNA. It is required for dam-dependent methyl-directed DNA mismatch repair. May act as a 'molecular matchmaker', a protein that promotes the formation of a stable complex between two or more DNA-binding proteins in an ATP-dependent manner without itself being part of a final effector complex. The polypeptide is DNA mismatch repair protein MutL (Serratia proteamaculans (strain 568)).